A 300-amino-acid chain; its full sequence is Solute carrier family 25 member 35 (300 aa).

Solcar repeat units follow at residues 1–90 (MDFL…AESR), 100–193 (HSPV…IKDL), and 203–294 (QSWK…LRSF). Transmembrane regions (helical) follow at residues 38-58 (TYQR…KVDG), 59-79 (LAAL…MNGI), 91-119 (GYLH…GAYL), 169-190 (AVGG…FSSI), 205-225 (WKVA…AMTP), and 277-300 (LGPH…TYAK).

This sequence belongs to the mitochondrial carrier (TC 2.A.29) family.

The protein resides in the mitochondrion inner membrane. It catalyses the reaction a dicarboxylate(in) + sulfate(out) = a dicarboxylate(out) + sulfate(in). In terms of biological role, putative antiporter that exchanges dicarboxylates and sulfur oxoanions across the inner membrane of mitochondria. This is Solute carrier family 25 member 35 (Slc25a35) from Mus musculus (Mouse).